The sequence spans 240 residues: Enolase-phosphatase E1 (240 aa).

Mg(2+) is bound by residues Asp9 and Glu11. Substrate is bound by residues 129–130 (SS) and Lys168. Asp195 provides a ligand contact to Mg(2+).

The protein belongs to the HAD-like hydrolase superfamily. MasA/MtnC family. As to quaternary structure, monomer. Mg(2+) serves as cofactor.

Its subcellular location is the cytoplasm. It localises to the nucleus. The catalysed reaction is 5-methylsulfanyl-2,3-dioxopentyl phosphate + H2O = 1,2-dihydroxy-5-(methylsulfanyl)pent-1-en-3-one + phosphate. The protein operates within amino-acid biosynthesis; L-methionine biosynthesis via salvage pathway; L-methionine from S-methyl-5-thio-alpha-D-ribose 1-phosphate: step 3/6. Its pathway is amino-acid biosynthesis; L-methionine biosynthesis via salvage pathway; L-methionine from S-methyl-5-thio-alpha-D-ribose 1-phosphate: step 4/6. In terms of biological role, bifunctional enzyme that catalyzes the enolization of 2,3-diketo-5-methylthiopentyl-1-phosphate (DK-MTP-1-P) into the intermediate 2-hydroxy-3-keto-5-methylthiopentenyl-1-phosphate (HK-MTPenyl-1-P), which is then dephosphorylated to form the acireductone 1,2-dihydroxy-3-keto-5-methylthiopentene (DHK-MTPene). In Candida tropicalis (strain ATCC MYA-3404 / T1) (Yeast), this protein is Enolase-phosphatase E1.